The primary structure comprises 501 residues: Na(+)/H(+) antiporter NhaB (501 aa).

A run of 11 helical transmembrane segments spans residues 24–44 (VILL…PGVA), 46–66 (WLLI…YPLL), 90–110 (VLTN…IYFM), 145–165 (FLDA…FFSV), 206–226 (LLMH…VGEP), 239–259 (FAGF…AGLA), 302–319 (ALWI…GLAF), 351–371 (FQES…VAVI), 395–415 (MFFI…VATV), 450–470 (VATP…IAPL), and 478–498 (MVIM…YMVT).

This sequence belongs to the NhaB Na(+)/H(+) (TC 2.A.34) antiporter family.

Its subcellular location is the cell inner membrane. The enzyme catalyses 2 Na(+)(in) + 3 H(+)(out) = 2 Na(+)(out) + 3 H(+)(in). Na(+)/H(+) antiporter that extrudes sodium in exchange for external protons. This Marinobacter nauticus (strain ATCC 700491 / DSM 11845 / VT8) (Marinobacter aquaeolei) protein is Na(+)/H(+) antiporter NhaB.